The chain runs to 479 residues: GTPase Obg (479 aa).

An Obg domain is found at 2–159 (TTFVDRVELH…QDIVLELKTV (158 aa)). The tract at residues 61 to 87 (HHKPHRSATNGKPGEGGNRSGKDGQDL) is disordered. Positions 160-331 (ADVALVGYPS…LSFALAELVG (172 aa)) constitute an OBG-type G domain. GTP is bound by residues 166–173 (GYPSAGKS), 191–195 (FTTLV), 212–215 (DVPG), 283–286 (NKID), and 312–314 (SAV). Residues Ser173 and Thr193 each coordinate Mg(2+). In terms of domain architecture, OCT spans 349 to 431 (PKAVDDAGFT…DNAVVFDWEP (83 aa)). The span at 440 to 453 (LGRRGEDHRLDEPR) shows a compositional bias: basic and acidic residues. Residues 440 to 479 (LGRRGEDHRLDEPRPAAQRRRDKQAERDDAEKEYDDFEPF) form a disordered region. Acidic residues predominate over residues 470 to 479 (EKEYDDFEPF).

Belongs to the TRAFAC class OBG-HflX-like GTPase superfamily. OBG GTPase family. Monomer. Mg(2+) is required as a cofactor.

The protein localises to the cytoplasm. In terms of biological role, an essential GTPase which binds GTP, GDP and possibly (p)ppGpp with moderate affinity, with high nucleotide exchange rates and a fairly low GTP hydrolysis rate. Plays a role in control of the cell cycle, stress response, ribosome biogenesis and in those bacteria that undergo differentiation, in morphogenesis control. The chain is GTPase Obg from Streptomyces avermitilis (strain ATCC 31267 / DSM 46492 / JCM 5070 / NBRC 14893 / NCIMB 12804 / NRRL 8165 / MA-4680).